The chain runs to 357 residues: Cell division control protein 10 (357 aa).

Residues 34–306 (RGFQFNIMVV…ETFRSKQLIA (273 aa)) form the Septin-type G domain. The G1 motif stretch occupies residues 44–51 (GRSGLGKS). GTP contacts are provided by residues 44 to 51 (GRSGLGKS), threonine 78, glycine 104, 184 to 192 (KSDSLTLDE), glycine 240, and arginine 255. Residues 101-104 (DTPG) are G3 motif. The tract at residues 183–186 (AKSD) is G4 motif. The segment at 310 to 357 (NASNPNRQSQLQKDQGQTSQQSNQDLKNTSGVPNAPMFQSTTGTAAAR) is disordered.

The protein belongs to the TRAFAC class TrmE-Era-EngA-EngB-Septin-like GTPase superfamily. Septin GTPase family.

The protein resides in the bud neck. Functionally, plays a role in the cell cycle. Involved in the formation of the ring of filaments in the neck region at the mother-bud junction during mitosis. The chain is Cell division control protein 10 (CDC10) from Candida albicans (strain SC5314 / ATCC MYA-2876) (Yeast).